The sequence spans 179 residues: Large ribosomal subunit protein uL5 (179 aa).

It belongs to the universal ribosomal protein uL5 family. In terms of assembly, part of the 50S ribosomal subunit; part of the 5S rRNA/L5/L18/L25 subcomplex. Contacts the 5S rRNA and the P site tRNA. Forms a bridge to the 30S subunit in the 70S ribosome.

In terms of biological role, this is one of the proteins that bind and probably mediate the attachment of the 5S RNA into the large ribosomal subunit, where it forms part of the central protuberance. In the 70S ribosome it contacts protein S13 of the 30S subunit (bridge B1b), connecting the 2 subunits; this bridge is implicated in subunit movement. Contacts the P site tRNA; the 5S rRNA and some of its associated proteins might help stabilize positioning of ribosome-bound tRNAs. The protein is Large ribosomal subunit protein uL5 of Macrococcus caseolyticus (strain JCSC5402) (Macrococcoides caseolyticum).